The following is a 468-amino-acid chain: Ribulose bisphosphate carboxylase large chain (468 aa).

Lysine 5 is modified (N6,N6,N6-trimethyllysine). Substrate is bound by residues asparagine 114 and threonine 164. Lysine 166 (proton acceptor) is an active-site residue. Lysine 168 contributes to the substrate binding site. Residues lysine 192, aspartate 194, and glutamate 195 each coordinate Mg(2+). Lysine 192 is subject to N6-carboxylysine. The active-site Proton acceptor is the histidine 285. The substrate site is built by arginine 286, histidine 318, and serine 370.

Belongs to the RuBisCO large chain family. Type I subfamily. Heterohexadecamer of 8 large chains and 8 small chains; disulfide-linked. The disulfide link is formed within the large subunit homodimers. It depends on Mg(2+) as a cofactor. Post-translationally, the disulfide bond which can form in the large chain dimeric partners within the hexadecamer appears to be associated with oxidative stress and protein turnover.

It localises to the plastid. It is found in the chloroplast. It carries out the reaction 2 (2R)-3-phosphoglycerate + 2 H(+) = D-ribulose 1,5-bisphosphate + CO2 + H2O. The enzyme catalyses D-ribulose 1,5-bisphosphate + O2 = 2-phosphoglycolate + (2R)-3-phosphoglycerate + 2 H(+). In terms of biological role, ruBisCO catalyzes two reactions: the carboxylation of D-ribulose 1,5-bisphosphate, the primary event in carbon dioxide fixation, as well as the oxidative fragmentation of the pentose substrate in the photorespiration process. Both reactions occur simultaneously and in competition at the same active site. The sequence is that of Ribulose bisphosphate carboxylase large chain from Nolana spathulata (Chilean bell flower).